The sequence spans 419 residues: L-rhamnose isomerase (419 aa).

Positions 262, 294, and 296 each coordinate Mn(2+).

It belongs to the rhamnose isomerase family. As to quaternary structure, homotetramer. Mn(2+) serves as cofactor.

It is found in the cytoplasm. The enzyme catalyses L-rhamnopyranose = L-rhamnulose. It participates in carbohydrate degradation; L-rhamnose degradation; glycerone phosphate from L-rhamnose: step 1/3. Its function is as follows. Catalyzes the interconversion of L-rhamnose and L-rhamnulose. This chain is L-rhamnose isomerase, found in Escherichia coli O6:H1 (strain CFT073 / ATCC 700928 / UPEC).